Consider the following 428-residue polypeptide: GTPase Obg (428 aa).

The region spanning 1-158 (MFVDQVQVEV…RFIKLELKVL (158 aa)) is the Obg domain. Residues 159-333 (ADVGLVGFPS…LMHKTAEVLK (175 aa)) enclose the OBG-type G domain. GTP contacts are provided by residues 165-172 (GFPSVGKS), 190-194 (FTTLV), 212-215 (DLPG), 282-285 (TKMD), and 314-316 (SSL). Residues Ser-172 and Thr-192 each coordinate Mg(2+). Positions 350-428 (YKYQPEPALK…IDDFTFEFVE (79 aa)) constitute an OCT domain.

Belongs to the TRAFAC class OBG-HflX-like GTPase superfamily. OBG GTPase family. Monomer. Requires Mg(2+) as cofactor.

It is found in the cytoplasm. Its function is as follows. An essential GTPase which binds GTP, GDP and possibly (p)ppGpp with moderate affinity, with high nucleotide exchange rates and a fairly low GTP hydrolysis rate. Plays a role in control of the cell cycle, stress response, ribosome biogenesis and in those bacteria that undergo differentiation, in morphogenesis control. This chain is GTPase Obg, found in Lacticaseibacillus casei (strain BL23) (Lactobacillus casei).